Reading from the N-terminus, the 424-residue chain is CinA-like protein (424 aa).

This sequence belongs to the CinA family.

The protein is CinA-like protein of Shewanella loihica (strain ATCC BAA-1088 / PV-4).